The sequence spans 782 residues: Probable methionine--tRNA ligase, cytoplasmic (782 aa).

The 'HIGH' region signature appears at 231–241 (PYVNNVPHLGN). A 'KMSKS' region motif is present at residues 551 to 555 (KFSKS).

The protein belongs to the class-I aminoacyl-tRNA synthetase family.

The protein localises to the cytoplasm. The catalysed reaction is tRNA(Met) + L-methionine + ATP = L-methionyl-tRNA(Met) + AMP + diphosphate. The protein is Probable methionine--tRNA ligase, cytoplasmic (rar1) of Schizosaccharomyces pombe (strain 972 / ATCC 24843) (Fission yeast).